The sequence spans 338 residues: Malate dehydrogenase, mitochondrial (338 aa).

The transit peptide at 1–24 directs the protein to the mitochondrion; the sequence is MLSALARPAGAALRRSFSTSAQNN. NAD(+) contacts are provided by residues 31 to 37 and Asp57; that span reads GASGGIG. Ser33 carries an O-linked (GlcNAc) serine glycan. An N6-acetyllysine; alternate mark is found at Lys78 and Lys91. N6-succinyllysine; alternate is present on residues Lys78 and Lys91. Substrate contacts are provided by Arg104 and Arg110. NAD(+)-binding positions include Asn117 and 140–142; that span reads IAN. Asn142 contributes to the substrate binding site. At Lys165 the chain carries N6-acetyllysine. Arg176 serves as a coordination point for substrate. Lys185 is modified (N6-acetyllysine; alternate). Lys185 carries the N6-succinyllysine; alternate modification. The Proton acceptor role is filled by His200. Position 203 is an N6-succinyllysine (Lys203). N6-acetyllysine; alternate occurs at positions 215 and 239. Lys215 and Lys239 each carry N6-succinyllysine; alternate. Lys239 is subject to N6-malonyllysine; alternate. Residue Ser246 is modified to Phosphoserine. NAD(+) is bound at residue Met251. Lys269 carries the post-translational modification N6-succinyllysine. 3 positions are modified to N6-acetyllysine; alternate: Lys296, Lys301, and Lys307. N6-succinyllysine; alternate occurs at positions 296, 301, and 307. At Lys307 the chain carries N6-malonyllysine; alternate. Position 309 is a phosphothreonine (Thr309). 2 positions are modified to N6-acetyllysine; alternate: Lys314 and Lys324. An N6-succinyllysine; alternate mark is found at Lys314 and Lys324. Position 326 is a phosphoserine (Ser326). An N6-acetyllysine; alternate mark is found at Lys328, Lys329, and Lys335. The residue at position 328 (Lys328) is an N6-succinyllysine; alternate. Lys329 is subject to N6-malonyllysine; alternate. At Lys335 the chain carries N6-succinyllysine; alternate.

It belongs to the LDH/MDH superfamily. MDH type 1 family. As to quaternary structure, homodimer. In terms of processing, acetylation is enhanced after treatment either with trichostin A (TCA) or with nicotinamide (NAM) with the appearance of tri- and tetraacetylations. Glucose also increases acetylation. Acetylation of Lys-239 and Lys-314 is observed in liver mitochondria from fasted mice but not from fed mice.

The protein localises to the mitochondrion matrix. It catalyses the reaction (S)-malate + NAD(+) = oxaloacetate + NADH + H(+). Enzyme activity is enhanced by acetylation. In Mus musculus (Mouse), this protein is Malate dehydrogenase, mitochondrial (Mdh2).